Here is a 273-residue protein sequence, read N- to C-terminus: MASSLELPKFEPDRDRLVWYLAYGSNLSSQTFREDRQITPQAAVTITVPGWRLTLSSAGFPYREPSFASIVNVGSAGPTDEKHDGPCELPLHGTAYLITWSQWIKIVASEGGGIVYKEALLRGQPIQPQDQQRWGAELSVLTLVSTMERWPEPRPSQRYMGLILDGARAADFPASYIAQIRHKHPCYQPPSTTWERIGATLFLGFWTPVLTLLSLLTHAAARAGPGDDGHVPEGVRALVRFAMFTMWWVHDLIWSRIWGRGDGLFPGAMQLNG.

It belongs to the class-I pyridoxal-phosphate-dependent aminotransferase family.

The catalysed reaction is an alpha-(gamma-L-glutamyl)-L-amino acid = 5-oxo-L-proline + an L-alpha-amino acid. Its pathway is mycotoxin biosynthesis. Functionally, gamma-glutamyl cyclotransferase; part of the gene cluster that mediates the biosynthesis of aspirochlorine (or antibiotic A30641), an unusual halogenated spiro compound with distinctive antifungal properties due to selective inhibition of protein biosynthesis, and which is also active against bacteria, viruses, and murine tumor cells. The non-ribosomal peptide synthetase (NRPS) aclP is responsible the formation of the diketopiperazine (DKP) core from the condensation of 2 phenylalanine residues. One Phe residue is tailored into chlorotyrosine by hydroxylation and chlorination, whereas the second Phe undergoes an unprecedented C-C bond cleavage to be converted into glycine. After formation of the DKP, sulfur is incorporated into the DKP by conjugation with glutathione by aclG, followed by its stepwise degradation to the thiol by aclI, aclJ and aclK, and the dithiol oxidation by aclT. In addition, oxygenases (aclB, aclC, aclL and aclO) and O-methyltransferases (aclM and aclU) act as tailoring enzymes to produce the intermediate dechloroaspirochlorine. Ultimately, chlorination of dechloroaspirochlorine by the halogenase aclH is the last step in the aspirochlorine pathway. In Aspergillus oryzae (strain ATCC 42149 / RIB 40) (Yellow koji mold), this protein is Gamma-glutamyl cyclotransferase aclK.